Reading from the N-terminus, the 629-residue chain is tRNA uridine 5-carboxymethylaminomethyl modification enzyme MnmG (629 aa).

13–18 (GGGHAG) serves as a coordination point for FAD. 273-287 (GPRYCPSIEDKITRF) provides a ligand contact to NAD(+).

It belongs to the MnmG family. In terms of assembly, homodimer. Heterotetramer of two MnmE and two MnmG subunits. The cofactor is FAD.

The protein localises to the cytoplasm. In terms of biological role, NAD-binding protein involved in the addition of a carboxymethylaminomethyl (cmnm) group at the wobble position (U34) of certain tRNAs, forming tRNA-cmnm(5)s(2)U34. This Colwellia psychrerythraea (strain 34H / ATCC BAA-681) (Vibrio psychroerythus) protein is tRNA uridine 5-carboxymethylaminomethyl modification enzyme MnmG.